Reading from the N-terminus, the 351-residue chain is MTKISKIIDELNNQQADAAWITTPLNVYYFTGYRSEPHERLFALLIKKDGKQVLFCPKMEVEEVKASSFTGEIVGYLDTENPFSLYPQTINKLLIESEHLTVARQKQLISGFNVNSFGDVDLTIKQLRNIKSEDEISKIRKAAELADKCIEIGVSYLKEGVTEREVVNHIEQTIKQYGVNEMSFDTMVLFGDHAASPHGTPGDRRLKSNEYVLFDLGVIYEHYCSDMTRTIKFGEPNKEAQEIYNIVLEAETSAIQAIKPGIPLKDIDHIARNIISEKGYGEYFPHRLGHGLGLQEHEYQDVSSTNSNLLEAGMVITIEPGIYVPGVAGVRIEDDILVTNEGYEVLTHYEK.

Positions 215, 226, 290, 319, and 333 each coordinate Mn(2+).

The protein belongs to the peptidase M24B family. The cofactor is Mn(2+).

This is an uncharacterized protein from Staphylococcus aureus (strain bovine RF122 / ET3-1).